Consider the following 352-residue polypeptide: Glycerol-3-phosphate dehydrogenase 1-like protein (352 aa).

NAD(+) is bound at residue 13-18 (GSGNWG). Position 123 (Lys-123) interacts with substrate. Ala-156 contributes to the NAD(+) binding site. Residue Lys-207 is the Proton acceptor of the active site. Arg-272, Lys-299, and Gln-301 together coordinate NAD(+). Position 272-273 (272-273 (RN)) interacts with substrate.

The protein belongs to the NAD-dependent glycerol-3-phosphate dehydrogenase family.

The protein localises to the cytoplasm. It carries out the reaction sn-glycerol 3-phosphate + NAD(+) = dihydroxyacetone phosphate + NADH + H(+). In terms of biological role, plays a role in regulating cardiac sodium current. This Xenopus tropicalis (Western clawed frog) protein is Glycerol-3-phosphate dehydrogenase 1-like protein (gpd1l).